A 548-amino-acid chain; its full sequence is Chaperonin GroEL (548 aa).

Residues 30-33, K51, 87-91, G415, 479-481, and D495 each bind ATP; these read TLGP, DGTTT, and NAA.

It belongs to the chaperonin (HSP60) family. As to quaternary structure, forms a cylinder of 14 subunits composed of two heptameric rings stacked back-to-back. Interacts with the co-chaperonin GroES.

The protein localises to the cytoplasm. It carries out the reaction ATP + H2O + a folded polypeptide = ADP + phosphate + an unfolded polypeptide.. Together with its co-chaperonin GroES, plays an essential role in assisting protein folding. The GroEL-GroES system forms a nano-cage that allows encapsulation of the non-native substrate proteins and provides a physical environment optimized to promote and accelerate protein folding. This is Chaperonin GroEL from Klebsiella pneumoniae (strain 342).